The following is a 250-amino-acid chain: uncharacterized protein (250 aa).

Disordered regions lie at residues 85–107 and 158–198; these read NQFP…QSEP and EPVP…AKVP. Residues 167–176 show a composition bias toward low complexity; it reads PAVEQPQVKQ.

This is an uncharacterized protein from Mycoplasma pneumoniae (strain ATCC 29342 / M129 / Subtype 1) (Mycoplasmoides pneumoniae).